Reading from the N-terminus, the 82-residue chain is uncharacterized protein (82 aa).

This is an uncharacterized protein from Escherichia coli (strain K12).